The primary structure comprises 145 residues: Peptide methionine sulfoxide reductase MsrB (145 aa).

Residues 4–127 enclose the MsrB domain; the sequence is SDELKQRIGD…NSAALKFIPY (124 aa). Cys-116 serves as the catalytic Nucleophile.

The protein belongs to the MsrB Met sulfoxide reductase family.

The enzyme catalyses L-methionyl-[protein] + [thioredoxin]-disulfide + H2O = L-methionyl-(R)-S-oxide-[protein] + [thioredoxin]-dithiol. This Streptococcus pyogenes serotype M1 protein is Peptide methionine sulfoxide reductase MsrB.